A 91-amino-acid chain; its full sequence is MVKHKVTVMFGPYVSCGILQYKTARLEGLQELLLSDGHSVEFEKTEDRDDVELVVHGEIVFRCKIQDLQYGGDGKLDPTCHRALEAVQKAY.

Belongs to the UPF0728 family.

This is UPF0728 protein v1g117062 from Nematostella vectensis (Starlet sea anemone).